The sequence spans 367 residues: Peptide chain release factor 2 (367 aa).

Gln-254 bears the N5-methylglutamine mark.

This sequence belongs to the prokaryotic/mitochondrial release factor family. Post-translationally, methylated by PrmC. Methylation increases the termination efficiency of RF2.

It localises to the cytoplasm. In terms of biological role, peptide chain release factor 2 directs the termination of translation in response to the peptide chain termination codons UGA and UAA. The chain is Peptide chain release factor 2 from Neisseria gonorrhoeae (strain ATCC 700825 / FA 1090).